A 503-amino-acid polypeptide reads, in one-letter code: 26S proteasome non-ATPase regulatory subunit 5 (503 aa).

Position 2 is an N-acetylalanine (alanine 2).

This sequence belongs to the proteasome subunit S5B/HSM3 family. Interacts with PSMC1, PSMC2, PSMD1 and PSMD6. Part of transient complex containing PSMD5, PSMC2, PSMC1 and PSMD2 formed during the assembly of the 26S proteasome.

In terms of biological role, acts as a chaperone during the assembly of the 26S proteasome, specifically of the base subcomplex of the PA700/19S regulatory complex (RC). In the initial step of the base subcomplex assembly is part of an intermediate PSMD5:PSMC2:PSMC1:PSMD2 module which probably assembles with a PSMD10:PSMC4:PSMC5:PAAF1 module followed by dissociation of PSMD5. This chain is 26S proteasome non-ATPase regulatory subunit 5 (PSMD5), found in Bos taurus (Bovine).